We begin with the raw amino-acid sequence, 701 residues long: Arachidonate 12-lipoxygenase, 12R-type (701 aa).

One can recognise a PLAT domain in the interval 2–119 (ATYKVKVATG…TLSLREATGK (118 aa)). The region spanning 120-701 (TTADDTLPIL…PVLIENSISI (582 aa)) is the Lipoxygenase domain. 5 residues coordinate Fe cation: His-398, His-403, His-578, Asn-582, and Ile-701.

It belongs to the lipoxygenase family. Requires Fe cation as cofactor.

The protein resides in the cytoplasm. Its subcellular location is the perinuclear region. It carries out the reaction (5Z,8Z,11Z,14Z)-eicosatetraenoate + O2 = (12R)-hydroperoxy-(5Z,8Z,10E,14Z)-eicosatetraenoate. The enzyme catalyses N-[omega-(9Z,12Z)-octadecadienoyloxy]acyl-beta-D-glucosyl-(1&lt;-&gt;1)-octadecasphing-4E-enine + O2 = N-[omega-(9R)-hydroperoxy-(10E,12Z)-octadecadienoyloxy]acyl-beta-D-glucosyl-(1&lt;-&gt;1)-octadecasphing-4E-enine. The catalysed reaction is a N-[omega-(9Z,12Z)-octadecadienoyloxy]-acylsphin-4E-enine + O2 = a N-[omega-(9R)-hydroperoxy-(10E,12Z)-octadecadienoyloxy]-acylsphin-4E-enine. It catalyses the reaction (6Z,9Z,12Z)-octadecatrienoate + O2 = 10-hydroperoxy-(6Z,8E,12Z)-octadecatrienoate. It carries out the reaction (4Z,7Z,10Z,13Z,16Z,19Z)-docosahexaenoate + O2 = 14-hydroperoxy-(4Z,7Z,10Z,12E,16Z,19Z)-docosahexaenoate. The enzyme catalyses (8Z,11Z,14Z)-eicosatrienoate + O2 = (8Z,10E,14Z)-12-hydroperoxyeicosatrienoate. The catalysed reaction is (5Z,8Z,11Z,14Z,17Z)-eicosapentaenoate + O2 = (5Z,7Z,8Z,10E,14Z,17Z)-12-hydroperoxyeicosapentaenoate. It catalyses the reaction (6Z,9Z,12Z)-octadecatrienoate + O2 = 10R-hydroperoxy-(6Z,8E,12Z)-octadecatrienoate. It carries out the reaction 1-O-methyl-(5Z,8Z,11Z,14Z)-eicosatetraenoate + O2 = 1-O-methyl (5Z,8Z,10E,12R,14Z)-hydroperoxyiecosatetraenoate. The enzyme catalyses 1-O-methyl-(5Z,8Z,11Z,14Z)-eicosatetraenoate + O2 = 1-O-methyl-8-hydroperoxy-(5Z,9E,11Z,14Z)-eicosatetraenoate. The catalysed reaction is 1-O-methyl-(5Z,8Z,11Z,14Z)-eicosatetraenoate + O2 = 1-O-methyl-(8R)-hydroperoxy-(5Z,9E,11Z,14Z)-eicosatrienoate. It catalyses the reaction 1-O-methyl-(9Z,12Z)-octadecadienoate + O2 = 1-O-methyl-(9R)-hydroperoxy-(10E,12Z)-octadecadienoate. It carries out the reaction 1-O-methyl-20-hydroxy-(5Z,8Z,11Z,14Z)-eicosatetraenoate + O2 = 1-O-methyl-8-hydroperoxy-20-hydroxy-(5Z,9E,11Z,14Z)-eicosatetraenoate. The enzyme catalyses 1-O-methyl-20-hydroxy-(5Z,8Z,11Z,14Z)-eicosatetraenoate + O2 = 1-O-methyl-12-hydroperoxy-20-hydroxy-(5Z,8Z,10E,14Z)-eicosatetraenoate. The catalysed reaction is 1-O-methyl-20-hydroxy-(5Z,8Z,11Z,14Z)-eicosatetraenoate + O2 = 1-O-methyl-9-hydroperoxy-20-hydroxy-(5Z,7E,11Z,14Z)-eicosatetraenoate. It catalyses the reaction 1-O-methyl-(9Z,12Z)-octadecadienoate + O2 = 1-O-methyl-(13S)-hydroperoxy-(9Z,11E)-octadecadienoate. It functions in the pathway lipid metabolism; hydroperoxy eicosatetraenoic acid biosynthesis. Its pathway is lipid metabolism; sphingolipid metabolism. Increased by calcium. In terms of biological role, catalyzes the regio and stereo-specific incorporation of a single molecule of dioxygen into free and esterified polyunsaturated fatty acids generating lipid hydroperoxides that can be further reduced to the corresponding hydroxy species. In the skin, acts upstream of ALOXE3 on the lineolate moiety of esterified omega-hydroxyacyl-sphingosine (EOS) ceramides to produce an epoxy-ketone derivative, a crucial step in the conjugation of omega-hydroxyceramide to membrane proteins. Therefore plays a crucial role in the synthesis of corneocytes lipid envelope and the establishment of the skin barrier to water loss. May also play a role in the regulation of the expression of airway mucins. This is Arachidonate 12-lipoxygenase, 12R-type from Rattus norvegicus (Rat).